We begin with the raw amino-acid sequence, 368 residues long: 3-dehydroquinate synthase (368 aa).

NAD(+) is bound by residues 69 to 74, 103 to 107, 127 to 128, Lys-140, and Lys-149; these read DGEAYK, GVIGD, and TT. The Zn(2+) site is built by Glu-182, His-245, and His-262.

Belongs to the sugar phosphate cyclases superfamily. Dehydroquinate synthase family. It depends on NAD(+) as a cofactor. Co(2+) serves as cofactor. Zn(2+) is required as a cofactor.

It is found in the cytoplasm. The catalysed reaction is 7-phospho-2-dehydro-3-deoxy-D-arabino-heptonate = 3-dehydroquinate + phosphate. It functions in the pathway metabolic intermediate biosynthesis; chorismate biosynthesis; chorismate from D-erythrose 4-phosphate and phosphoenolpyruvate: step 2/7. Catalyzes the conversion of 3-deoxy-D-arabino-heptulosonate 7-phosphate (DAHP) to dehydroquinate (DHQ). The sequence is that of 3-dehydroquinate synthase from Pseudomonas aeruginosa (strain ATCC 15692 / DSM 22644 / CIP 104116 / JCM 14847 / LMG 12228 / 1C / PRS 101 / PAO1).